The following is a 632-amino-acid chain: tRNA uridine 5-carboxymethylaminomethyl modification enzyme MnmG (632 aa).

15-20 serves as a coordination point for FAD; it reads GAGHAG. Residues 205-231 are disordered; that stretch reads PRVDGNTIDYSKTQEEPGDKEPRHFSY. Positions 216-228 are enriched in basic and acidic residues; the sequence is KTQEEPGDKEPRH. Residue 276–290 coordinates NAD(+); the sequence is GPRYCPSIEDKVVRF.

It belongs to the MnmG family. In terms of assembly, homodimer. Heterotetramer of two MnmE and two MnmG subunits. The cofactor is FAD.

The protein localises to the cytoplasm. Functionally, NAD-binding protein involved in the addition of a carboxymethylaminomethyl (cmnm) group at the wobble position (U34) of certain tRNAs, forming tRNA-cmnm(5)s(2)U34. The protein is tRNA uridine 5-carboxymethylaminomethyl modification enzyme MnmG of Lactobacillus johnsonii (strain CNCM I-12250 / La1 / NCC 533).